Consider the following 147-residue polypeptide: Globin (147 aa).

Ser-2 carries the post-translational modification N-acetylserine. The 146-residue stretch at 2-147 (SLSAAEADLA…IIDALKAAGK (146 aa)) folds into the Globin domain. His-96 provides a ligand contact to heme b.

This sequence belongs to the globin family. As to quaternary structure, monomer.

In Aplysia limacina (Sea hare), this protein is Globin.